Here is a 1515-residue protein sequence, read N- to C-terminus: Neurite extension and migration factor (1515 aa).

A compositionally biased stretch (basic and acidic residues) spans 381 to 405; the sequence is DKKKGKEEVHEDKSIETKDEKDNGE. Disordered stretches follow at residues 381 to 415, 505 to 529, 731 to 774, 1158 to 1225, 1372 to 1422, and 1435 to 1479; these read DKKK…KPCG, VNER…PKKR, KKIK…HMSE, FDEP…TKKG, TPQE…EDSR, and TLGN…AGTT. 2 stretches are compositionally biased toward polar residues: residues 746–757 and 763–772; these read SPVSEDTSSKAN and TPGTSNSSHM. A compositionally biased stretch (low complexity) spans 1180–1193; the sequence is PGKSGAVSQSSSQK. Residues 1442–1452 are compositionally biased toward basic residues; that stretch reads THKKLYRHKSS. Basic and acidic residues predominate over residues 1455-1479; it reads GLRDEKYKGKRVEREQAHKDEAGTT.

Expressed in the brain, particularly during the late embryonic and perinatal stages of development. In the developing brain, it is expressed only in the cortical plate and subplate region but not in the intermediate or ventricular zone.

Its subcellular location is the nucleus. The protein resides in the cytoplasm. Involved in neurite outgrowth by regulating cell-cell adhesion via the N-cadherin signaling pathway. May act by regulating expression of protein-coding genes, such as N-cadherins and integrin beta-1 (ITGB1). The sequence is that of Neurite extension and migration factor from Mus musculus (Mouse).